The chain runs to 239 residues: MPSKSSSPQSNSTRKNSCGCCCFSVRKFGFLAVFVAIFAALYSYLDARLEQFYIFNPEHLHDLSQRAIQAHGNDTRAMVDFIVAELDQKIPGNHLNKNEEWIFNNAGGAMGAMYIIHASITEYLIIFGTAIGTEGHTGRHTADDYFNILQGTQVAFVPGTFEPEVYPPGTVHHLRRGEVKQYKMEQSCFALEYARGWIPPMLFFGYADTFTSTLDFPTLWATTRVTGREMITNLLRRKF.

Asparagine 11 is a glycosylation site (N-linked (GlcNAc...) asparagine). A helical transmembrane segment spans residues 27–47; it reads KFGFLAVFVAIFAALYSYLDA. Asparagine 73 carries N-linked (GlcNAc...) asparagine glycosylation.

This sequence belongs to the ERG2 family.

Its subcellular location is the endoplasmic reticulum membrane. It catalyses the reaction fecosterol = episterol. The protein operates within steroid metabolism; ergosterol biosynthesis. In terms of biological role, C-8 sterol isomerase; part of the third module of ergosterol biosynthesis pathway that includes the late steps of the pathway. Erg2 catalyzes the reaction which results in unsaturation at C-7 in the B ring of sterols and thus converts fecosterol to episterol. The third module or late pathway involves the ergosterol synthesis itself through consecutive reactions that mainly occur in the endoplasmic reticulum (ER) membrane. Firstly, the squalene synthase erg9 catalyzes the condensation of 2 farnesyl pyrophosphate moieties to form squalene, which is the precursor of all steroids. Squalene synthase is crucial for balancing the incorporation of farnesyl diphosphate (FPP) into sterol and nonsterol isoprene synthesis. Secondly, squalene is converted into lanosterol by the consecutive action of the squalene epoxidase erg1 and the lanosterol synthase erg7. Then, the delta(24)-sterol C-methyltransferase erg6 methylates lanosterol at C-24 to produce eburicol. Eburicol is the substrate of the sterol 14-alpha demethylase encoded by cyp51A and cyp51B, to yield 4,4,24-trimethyl ergosta-8,14,24(28)-trienol. The C-14 reductase erg24 then reduces the C14=C15 double bond which leads to 4,4-dimethylfecosterol. A sequence of further demethylations at C-4, involving the C-4 demethylation complex containing the C-4 methylsterol oxidases erg25A or erg25B, the sterol-4-alpha-carboxylate 3-dehydrogenase erg26 and the 3-keto-steroid reductase erg27, leads to the production of fecosterol via 4-methylfecosterol. The C-8 sterol isomerase erg2 then catalyzes the reaction which results in unsaturation at C-7 in the B ring of sterols and thus converts fecosterol to episterol. The sterol-C5-desaturase erg3B then catalyzes the introduction of a C-5 double bond in the B ring to produce 5-dehydroepisterol. The 2 other sterol-C5-desaturases, erg3A and erg3C, seem to be less important in ergosterol biosynthesis. The C-22 sterol desaturase erg5 further converts 5-dehydroepisterol into ergosta-5,7,22,24(28)-tetraen-3beta-ol by forming the C-22(23) double bond in the sterol side chain. Finally, ergosta-5,7,22,24(28)-tetraen-3beta-ol is substrate of the C-24(28) sterol reductases erg4A and erg4B to produce ergosterol. Possible alternative sterol biosynthetic pathways might exist from fecosterol to ergosterol, depending on the activities of the erg3 isoforms. This Aspergillus fumigatus (strain ATCC MYA-4609 / CBS 101355 / FGSC A1100 / Af293) (Neosartorya fumigata) protein is C-8 sterol isomerase erg2.